Reading from the N-terminus, the 688-residue chain is Complement C1s-1 subcomponent (688 aa).

The first 15 residues, 1–15 (MWYLVLFSLLASFSA), serve as a signal peptide directing secretion. The region spanning 16–130 (EPTMHGEILS…TGFAAYYTAI (115 aa)) is the CUB 1 domain. Residues Glu-60, Asp-68, Asp-113, Asp-131, Val-132, and Glu-134 each contribute to the Ca(2+) site. Cys-65 and Cys-83 are joined by a disulfide. The EGF-like; calcium-binding domain occupies 131–172 (DVNECTDFTDVPCSHFCNNFIGGYFCSCPPEYFLHDDMRNCG). Disulfide bonds link Cys-135/Cys-147, Cys-143/Cys-156, and Cys-158/Cys-171. Ca(2+) contacts are provided by Asn-149, Phe-150, and Gly-153. (3R)-3-hydroxyasparagine is present on Asn-149. A glycan (N-linked (GlcNAc...) asparagine) is linked at Asn-174. An intrachain disulfide couples Cys-175 to Cys-202. The region spanning 175 to 290 (CSGDVFTALI…KGWKLRYHGD (116 aa)) is the CUB 2 domain. Glu-226, Asp-236, Asp-275, Gly-278, and Gln-279 together coordinate Ca(2+). Cys-234 and Cys-251 are oxidised to a cystine. Sushi domains lie at 292 to 356 (ISCP…KCQP) and 357 to 423 (VYCG…RCIP). 7 cysteine pairs are disulfide-bonded: Cys-294/Cys-341, Cys-321/Cys-354, Cys-359/Cys-403, Cys-386/Cys-421, Cys-425/Cys-549, Cys-595/Cys-618, and Cys-627/Cys-659. A Peptidase S1 domain is found at 438–680 (IFGGQPAKIE…YVDWILKTMQ (243 aa)). Active-site charge relay system residues include His-475 and Asp-529. The Charge relay system role is filled by Ser-631.

This sequence belongs to the peptidase S1 family. Core component of the complement C1 complex, a calcium-dependent complex composed of 1 molecule of the C1Q subcomplex, 2 molecules of C1R and 2 molecules of C1S. The C1Q subcomplex is composed 18 subunits: 3 chains of C1QA, C1QB, and C1QC trimerize to form 6 collagen-like triple helices connected to six globular ligand-recognition modules. In terms of processing, cleaved and activated by C1R to generate Complement C1s subcomponent heavy and light chains. The iron and 2-oxoglutarate dependent 3-hydroxylation of aspartate and asparagine is (R) stereospecific within EGF domains. In terms of tissue distribution, specifically expressed in male reproductive tissues.

Its subcellular location is the secreted. It localises to the cell surface. The catalysed reaction is Cleavage of Arg-|-Ala bond in complement component C4 to form C4a and C4b, and Lys(or Arg)-|-Lys bond in complement component C2 to form C2a and C2b: the 'classical' pathway C3 convertase.. Cleaved and activated by C1R. Immunoglobulin-binding promotes autoactivation of C1R, which results in the cleavage of the Arg-Ile bond in the catalytic domain. Inhibited by C1 inhibitor (SERPING1). Component of the complement C1 complex, a multiprotein complex that initiates the classical pathway of the complement system, a cascade of proteins that leads to phagocytosis and breakdown of pathogens and signaling that strengthens the adaptive immune system. C1S is activated following association of the C1 complex with immunoglobulins (IgG or IgM) complexed with antigens to form antigen-antibody complexes on the surface of pathogens. C1S is cleaved and activated by C1R to generate C1s subcomponent heavy and light chains. C1s subcomponent light chain then cleaves and activates C2 and C4, the next components of the classical complement pathway. In terms of biological role, serine protease component of the complement C1 complex, which catalyzes cleavage and activation of C2 and C4, the next components of the classical complement pathway. Also cleaves IGFBP5 and thereby inhibits the trophic effects of IGF1. The polypeptide is Complement C1s-1 subcomponent (Mus musculus (Mouse)).